The primary structure comprises 322 residues: Undecaprenyl-phosphate 4-deoxy-4-formamido-L-arabinose transferase (322 aa).

Residues 1–235 (MFEIHPVKKV…TCLTTTPLRM (235 aa)) are Cytoplasmic-facing. The chain crosses the membrane as a helical span at residues 236 to 256 (LSLLGSIIAIGGFSIAVLLVI). Residues 257–269 (LRLTFGPQWAAEG) are Periplasmic-facing. The helical transmembrane segment at 270–290 (VFMLFAVLFTFIGAQFIGMGL) threads the bilayer. Residues 291–322 (LGEYIGRIYTDVRARPRYFVQQVIRPSSKENE) are Cytoplasmic-facing.

The protein belongs to the glycosyltransferase 2 family.

The protein resides in the cell inner membrane. It carries out the reaction UDP-4-deoxy-4-formamido-beta-L-arabinose + di-trans,octa-cis-undecaprenyl phosphate = 4-deoxy-4-formamido-alpha-L-arabinopyranosyl di-trans,octa-cis-undecaprenyl phosphate + UDP. The protein operates within glycolipid biosynthesis; 4-amino-4-deoxy-alpha-L-arabinose undecaprenyl phosphate biosynthesis; 4-amino-4-deoxy-alpha-L-arabinose undecaprenyl phosphate from UDP-4-deoxy-4-formamido-beta-L-arabinose and undecaprenyl phosphate: step 1/2. It functions in the pathway bacterial outer membrane biogenesis; lipopolysaccharide biosynthesis. Catalyzes the transfer of 4-deoxy-4-formamido-L-arabinose from UDP to undecaprenyl phosphate. The modified arabinose is attached to lipid A and is required for resistance to polymyxin and cationic antimicrobial peptides. The chain is Undecaprenyl-phosphate 4-deoxy-4-formamido-L-arabinose transferase from Escherichia coli O17:K52:H18 (strain UMN026 / ExPEC).